The primary structure comprises 373 residues: D-amino-acid transaminase, chloroplastic (373 aa).

Residues 1 to 57 constitute a chloroplast transit peptide; the sequence is MAGLSLEFTVNTWNLRSLSQVPCPLRHGFRFPRRLTRRRTILMCSDSSSQSWNVPVL. Residue arginine 128 coordinates pyridoxal 5'-phosphate. The active-site Proton acceptor is the lysine 222. N6-(pyridoxal phosphate)lysine is present on lysine 222. Residue glutamate 255 coordinates pyridoxal 5'-phosphate.

This sequence belongs to the class-IV pyridoxal-phosphate-dependent aminotransferase family. As to quaternary structure, homodimer. Requires pyridoxal 5'-phosphate as cofactor.

The protein localises to the plastid. It localises to the chloroplast. It carries out the reaction D-alanine + 2-oxoglutarate = D-glutamate + pyruvate. The enzyme catalyses 4-amino-4-deoxychorismate = 4-aminobenzoate + pyruvate + H(+). It participates in cofactor biosynthesis; tetrahydrofolate biosynthesis; 4-aminobenzoate from chorismate: step 2/2. Its activity is regulated as follows. Inhibited by hydroxylamine or amino-oxyacetic acid. Its function is as follows. Amino acid aminotransferase showing activity for D-Asp and D-Ala as amino donors with 2-oxoglutarate as an amino acceptor. Can also use D-Met, D-Tyr, D-Phe, D-Gln, D-Trp and D-Asn as substrates, but no activity with L-Asp, L-Ala, L-Leu, L-Ile or L-Val. Also catalyzes the reverse reaction where an amino group is transferred from D-Glu to pyruvate or oxaloacetate to produce D-Ala or D-Asp, respectively. Also involved in folate biosynthesis, acting as an aminodeoxychorismate lyase converting 4-amino-4-deoxychorismate (ADC) to p-aminobenzoate (PABA). In Arabidopsis thaliana (Mouse-ear cress), this protein is D-amino-acid transaminase, chloroplastic.